The following is a 341-amino-acid chain: Muscleblind-like protein 1 (341 aa).

Phosphothreonine is present on threonine 6. C3H1-type zinc fingers lie at residues 13 to 41, 47 to 73, 178 to 206, and 214 to 240; these read WLTL…HPSK, NGRV…HPPP, TDRL…HPAD, and DNTV…HPPA.

The protein belongs to the muscleblind family. In terms of assembly, interacts with DDX1 and YBX1. Interacts with HNRNPH1; the interaction in RNA-independent. Interacts with RBPMS; the interaction allows cooperative assembly of RNA-bound stable cell-specific alternative splicing regulatory complexes. In terms of tissue distribution, highly expressed in cardiac and skeletal muscle. Weakly expressed in heart and eye (at protein level).

Its subcellular location is the nucleus. The protein localises to the cytoplasm. It localises to the cytoplasmic granule. Its function is as follows. Mediates pre-mRNA alternative splicing regulation. Acts either as activator or repressor of splicing on specific pre-mRNA targets. Inhibits cardiac troponin-T (TNNT2) pre-mRNA exon inclusion but induces insulin receptor (IR) pre-mRNA exon inclusion in muscle. Antagonizes the alternative splicing activity pattern of CELF proteins. Regulates the TNNT2 exon 5 skipping through competition with U2AF2. Inhibits the formation of the spliceosome A complex on intron 4 of TNNT2 pre-mRNA. Binds to the stem-loop structure within the polypyrimidine tract of TNNT2 intron 4 during spliceosome assembly. Binds to the 5'-YGCU(U/G)Y-3'consensus sequence. Binds to the IR RNA. Binds to CUG triplet repeat expansion in myotonic dystrophy muscle cells by sequestering the target RNAs. Together with RNA binding proteins RBPMS and RBFOX2, activates vascular smooth muscle cells alternative splicing events. Regulates NCOR2 alternative splicing. The protein is Muscleblind-like protein 1 (Mbnl1) of Mus musculus (Mouse).